A 150-amino-acid chain; its full sequence is SsrA-binding protein (150 aa).

Belongs to the SmpB family.

The protein resides in the cytoplasm. Functionally, required for rescue of stalled ribosomes mediated by trans-translation. Binds to transfer-messenger RNA (tmRNA), required for stable association of tmRNA with ribosomes. tmRNA and SmpB together mimic tRNA shape, replacing the anticodon stem-loop with SmpB. tmRNA is encoded by the ssrA gene; the 2 termini fold to resemble tRNA(Ala) and it encodes a 'tag peptide', a short internal open reading frame. During trans-translation Ala-aminoacylated tmRNA acts like a tRNA, entering the A-site of stalled ribosomes, displacing the stalled mRNA. The ribosome then switches to translate the ORF on the tmRNA; the nascent peptide is terminated with the 'tag peptide' encoded by the tmRNA and targeted for degradation. The ribosome is freed to recommence translation, which seems to be the essential function of trans-translation. The chain is SsrA-binding protein from Campylobacter jejuni subsp. jejuni serotype O:6 (strain 81116 / NCTC 11828).